The sequence spans 212 residues: Probable GH family 25 lysozyme 2 (212 aa).

Residues 1 to 19 (MRFIALLISFFALLKVISA) form the signal peptide. The Ch-type lysozyme domain maps to 20–212 (ISGVDISSAS…GLGFDLNWYP (193 aa)). Residues D24, D112, and E114 contribute to the active site.

It belongs to the glycosyl hydrolase 25 family.

Its subcellular location is the secreted. The catalysed reaction is Hydrolysis of (1-&gt;4)-beta-linkages between N-acetylmuramic acid and N-acetyl-D-glucosamine residues in a peptidoglycan and between N-acetyl-D-glucosamine residues in chitodextrins.. The sequence is that of Probable GH family 25 lysozyme 2 from Dictyostelium discoideum (Social amoeba).